Here is a 510-residue protein sequence, read N- to C-terminus: NAD(P)H-quinone oxidoreductase subunit 2, chloroplastic (510 aa).

13 helical membrane-spanning segments follow: residues 26–46 (LFDGSFIFPECILIFGLILLL), 57–77 (IPWLYFISSTSLVMSIMALLF), 99–119 (IFQVLILLCSTLCIPLSVEYI), 124–144 (MAITEFLLFVLTATLGGMFLC), 149–169 (LITIFVAPECFSFCSYLLSGY), 184–204 (LLMGGASSSILVHGFSWLYGL), 227–247 (PGISIALIFITVGIGFKLSPA), 295–315 (WHLLLEILALLSMILGNLIAI), 323–343 (MLAYSSIGQIGYIIIGIIVGD), 354–374 (YMLFYISMNLGTFACIILFGL), 395–415 (ALSLALCLLSLGGLPPLAGFF), 418–438 (LYLFWCGWQAGLYFLVLIALV), and 484–504 (MIVCVIASTIPGISMNPIIAI).

This sequence belongs to the complex I subunit 2 family. NDH is composed of at least 16 different subunits, 5 of which are encoded in the nucleus.

It is found in the plastid. The protein localises to the chloroplast thylakoid membrane. It carries out the reaction a plastoquinone + NADH + (n+1) H(+)(in) = a plastoquinol + NAD(+) + n H(+)(out). The catalysed reaction is a plastoquinone + NADPH + (n+1) H(+)(in) = a plastoquinol + NADP(+) + n H(+)(out). NDH shuttles electrons from NAD(P)H:plastoquinone, via FMN and iron-sulfur (Fe-S) centers, to quinones in the photosynthetic chain and possibly in a chloroplast respiratory chain. The immediate electron acceptor for the enzyme in this species is believed to be plastoquinone. Couples the redox reaction to proton translocation, and thus conserves the redox energy in a proton gradient. This Trachelium caeruleum (Blue throatwort) protein is NAD(P)H-quinone oxidoreductase subunit 2, chloroplastic.